The sequence spans 340 residues: Putative methionyl-tRNA formyltransferase (340 aa).

Belongs to the Fmt family.

It localises to the mitochondrion. Its subcellular location is the mitochondrion matrix. The protein localises to the cytoplasm. It carries out the reaction L-methionyl-tRNA(fMet) + (6R)-10-formyltetrahydrofolate = N-formyl-L-methionyl-tRNA(fMet) + (6S)-5,6,7,8-tetrahydrofolate + H(+). Functionally, formylates methionyl-tRNA in mitochondria and the cytoplasm. Responsible for the formylation of the N-terminally formylated (Nt-formylated) mitochondrial matrix proteins that are encoded by mitochondrial DNA. Nt-formylated proteins in the cytoplasm are strongly up-regulated in stationary phase or upon starvation for specific amino acids and are targeted for degradation by an E3 ubiquitin ligase-mediated fMet/N-end rule pathway. Increased Nt-formylation of cytosolic proteins appears to be important for adaptation to these stresses. The protein is Putative methionyl-tRNA formyltransferase (fmt1) of Schizosaccharomyces pombe (strain 972 / ATCC 24843) (Fission yeast).